The sequence spans 615 residues: Delta(14)-sterol reductase LBR (615 aa).

Positions M1–Q62 constitute a Tudor domain. The Nuclear portion of the chain corresponds to M1–G211. The interval D53–A109 is disordered. Position 55 is an N6-acetyllysine (K55). T58 bears the Phosphothreonine mark. Residues S59 and S67 each carry the phosphoserine modification. S71 and S86 each carry phosphoserine; by CDK1. Basic residues predominate over residues S73–S86. Residues S97 and S99 each carry the phosphoserine modification. T118 is modified (phosphothreonine). Phosphoserine is present on S128. Residue T200 is modified to Phosphothreonine. 8 helical membrane-spanning segments follow: residues V212–M232, V258–G278, F299–F319, F326–M346, V415–L435, I447–I467, E481–F501, and A561–V581. 2 positions are modified to N6-acetyllysine: K594 and K601.

Belongs to the ERG4/ERG24 family. As to quaternary structure, interacts with CBX5. Interacts with DNA. Interaction with DNA is sequence independent with higher affinity for supercoiled and relaxed circular DNA than linear DNA. Interacts with lamin B. Interacts with CLNK. Interacts with TMEM147; promoting LBR localization to the nucleus inner membrane. Post-translationally, phosphorylated by CDK1 in mitosis when the inner nuclear membrane breaks down into vesicles that dissociate from the lamina and the chromatin. It is phosphorylated by different protein kinases in interphase when the membrane is associated with these structures. Phosphorylation of LBR and HP1 proteins may be responsible for some of the alterations in chromatin organization and nuclear structure which occur at various times during the cell cycle. Phosphorylated by SRPK1. In late anaphase LBR is dephosphorylated, probably by PP1 and/or PP2A, allowing reassociation with chromatin.

Its subcellular location is the nucleus inner membrane. The protein localises to the nucleus. It is found in the cytoplasm. It localises to the endoplasmic reticulum membrane. It carries out the reaction 5alpha-cholest-8,14-dien-3beta-ol + NADPH + H(+) = 5alpha-cholest-8-en-3beta-ol + NADP(+). It catalyses the reaction 4,4-dimethyl-5alpha-cholesta-8,24-dien-3beta-ol + NADP(+) = 4,4-dimethyl-5alpha-cholesta-8,14,24-trien-3beta-ol + NADPH + H(+). The catalysed reaction is 4,4-dimethyl-8,14-cholestadien-3beta-ol + NADPH + H(+) = 4,4-dimethyl-5alpha-cholest-8-en-3beta-ol + NADP(+). It functions in the pathway steroid biosynthesis; cholesterol biosynthesis. Catalyzes the reduction of the C14-unsaturated bond of lanosterol, as part of the metabolic pathway leading to cholesterol biosynthesis. Plays a critical role in myeloid cell cholesterol biosynthesis which is essential to both myeloid cell growth and functional maturation. Mediates the activation of NADPH oxidases, perhaps by maintaining critical levels of cholesterol required for membrane lipid raft formation during neutrophil differentiation. Anchors the lamina and the heterochromatin to the inner nuclear membrane. This is Delta(14)-sterol reductase LBR (LBR) from Pongo abelii (Sumatran orangutan).